The following is a 431-amino-acid chain: MKNLVEELKWRGLFHDMMPGTEEQLTKESTTAYIGFDPTADSLHIGSMVQIILLVHLKNFGHKPIALIGGATGMIGDPSGKSDERNLLDEATLNKNVAGIKAVLSSFLDFNTTNANAPILVNNYDWMKDFSFIDFARDIGKRITVNYMMSKDSVKKRLGAEGEGMSFTEFTYQLIQGYDFQYLYKNHNCLLQMGGSDQWGNITTGTELVRRMGGEGAKAYALTTPLITKADGSKFGKSEGGNVWLTADKTSVYKFYQFWLNTSDDDAEKYIKIFTFLDKNTIDGLIEEHKTAPHLRVLQRKLTEEITILVHGKEELEKAIKASNILFGNSTSNDLKGLDAATFLEIFDGVPQAEISKTDIEAGINIVEVLNEKSGFLKSNGEARRALSANSIAVNKEKVTEEFTLTTKDMINNQFVLLQSGKKNYFVLNVK.

Y33 contacts L-tyrosine. The 'HIGH' region signature appears at 38–47; sequence PTADSLHIGS. Residues Y172 and Q176 each contribute to the L-tyrosine site. The short motif at 234–238 is the 'KMSKS' region element; that stretch reads KFGKS. K237 contributes to the ATP binding site. The S4 RNA-binding domain occupies 364 to 431; that stretch reads INIVEVLNEK…KKNYFVLNVK (68 aa).

This sequence belongs to the class-I aminoacyl-tRNA synthetase family. TyrS type 1 subfamily. As to quaternary structure, homodimer.

It localises to the cytoplasm. It catalyses the reaction tRNA(Tyr) + L-tyrosine + ATP = L-tyrosyl-tRNA(Tyr) + AMP + diphosphate + H(+). Its function is as follows. Catalyzes the attachment of tyrosine to tRNA(Tyr) in a two-step reaction: tyrosine is first activated by ATP to form Tyr-AMP and then transferred to the acceptor end of tRNA(Tyr). This is Tyrosine--tRNA ligase from Flavobacterium psychrophilum (strain ATCC 49511 / DSM 21280 / CIP 103535 / JIP02/86).